The following is a 792-amino-acid chain: Terminal nucleotidyltransferase 4A (792 aa).

The disordered stretch occupies residues 55 to 191; sequence GAAGRGSGGL…QFHPGRRKRE (137 aa). Composition is skewed to low complexity over residues 80–97 and 105–139; these read APAA…PAAE and SPSL…ASLG. The Mg(2+) site is built by aspartate 297 and aspartate 299. Positions 360, 385, 403, and 404 each coordinate ATP. The 59-residue stretch at 428–486 folds into the PAP-associated domain; the sequence is NLGMLLVEFFELYGRNFNYLKTGIRIKEGGAYIAKEEIMKAMTSGYRPSMLCIEDPLLP. The ATP site is built by asparagine 488 and arginine 492. Over residues 601 to 619 the composition is skewed to low complexity; that stretch reads QLLSSGSSASSVSSLSGSD. 2 disordered regions span residues 601–632 and 737–792; these read QLLS…TPSV and MKGS…SLSR. Positions 744–756 are enriched in gly residues; the sequence is TQGGGYSSVGSGG. A compositionally biased stretch (basic residues) spans 764–781; that stretch reads RGHHQYNRTGWRRKKHTH.

It belongs to the DNA polymerase type-B-like family. Component of a nuclear TRAMP-like complex, an ATP-dependent exosome regulatory complex consisting of a helicase (MTREX), an oligadenylate polymerase (TENT4B or TENT4A), and a substrate specific RNA-binding factor (ZCCHC7 or ZCCHC8). Several TRAMP-like complexes exist with specific compositions and are associated with nuclear, or nucleolar RNA exosomes. Mg(2+) is required as a cofactor. Requires Mn(2+) as cofactor.

It is found in the cytoplasm. Its subcellular location is the nucleus. It localises to the nucleoplasm. The enzyme catalyses RNA(n) + ATP = RNA(n)-3'-adenine ribonucleotide + diphosphate. In terms of biological role, terminal nucleotidyltransferase that catalyzes preferentially the transfer of ATP and GTP on RNA 3' poly(A) tail creating a heterogeneous 3' poly(A) tail leading to mRNAs stabilization by protecting mRNAs from active deadenylation. Also functions as a catalytic subunit of a TRAMP-like complex which has a poly(A) RNA polymerase activity and is involved in a post-transcriptional quality control mechanism. Polyadenylation with short oligo(A) tails is required for the degradative activity of the exosome on several of its nuclear RNA substrates. Has no terminal uridylyltransferase activity, and does not play a role in replication-dependent histone mRNA degradation via uridylation. This is Terminal nucleotidyltransferase 4A from Homo sapiens (Human).